A 69-amino-acid polypeptide reads, in one-letter code: Conotoxin Lt5.10 (69 aa).

The N-terminal stretch at 1–19 (MLCLPVFIILLLLASPAAP) is a signal peptide. The propeptide occupies 20–54 (KSLETRIQNDLIRAGLTDADLKTEKGFLSGLLNVA).

This sequence belongs to the conotoxin T superfamily. Contains 2 disulfide bonds that can be either 'C1-C3, C2-C4' or 'C1-C4, C2-C3', since these disulfide connectivities have been observed for conotoxins with cysteine framework V (for examples, see AC P0DQQ7 and AC P81755). Expressed by the venom duct.

The protein resides in the secreted. The polypeptide is Conotoxin Lt5.10 (Conus litteratus (Lettered cone)).